A 129-amino-acid chain; its full sequence is Fluoride-specific ion channel FluC 1 (129 aa).

3 helical membrane passes run 43-63 (ASLL…PAWV), 68-88 (VVSL…TFSY), and 100-120 (LLAA…AALG). 2 residues coordinate Na(+): Gly78 and Ser81.

It belongs to the fluoride channel Fluc/FEX (TC 1.A.43) family.

The protein localises to the cell membrane. The catalysed reaction is fluoride(in) = fluoride(out). Its activity is regulated as follows. Na(+) is not transported, but it plays an essential structural role and its presence is essential for fluoride channel function. Its function is as follows. Fluoride-specific ion channel. Important for reducing fluoride concentration in the cell, thus reducing its toxicity. The protein is Fluoride-specific ion channel FluC 1 of Frankia casuarinae (strain DSM 45818 / CECT 9043 / HFP020203 / CcI3).